An 802-amino-acid chain; its full sequence is Copper-exporting P-type ATPase (802 aa).

2 HMA domains span residues Lys-5 to Ala-70 and Glu-72 to Ser-138. Cu(+)-binding residues include Cys-16, Cys-19, Cys-83, and Cys-86. Transmembrane regions (helical) follow at residues Leu-161 to Asn-181, Trp-192 to Gly-212, Met-224 to Val-244, Leu-256 to Ala-276, Tyr-411 to Val-431, and Pro-438 to Ala-458. Asp-495 (4-aspartylphosphate intermediate) is an active-site residue. The Mg(2+) site is built by Asp-690 and Asp-694. The next 2 helical transmembrane spans lie at Leu-748–Leu-767 and Val-771–Leu-790.

It belongs to the cation transport ATPase (P-type) (TC 3.A.3) family. Type IB subfamily.

Its subcellular location is the cell membrane. It catalyses the reaction Cu(+)(in) + ATP + H2O = Cu(+)(out) + ADP + phosphate + H(+). Its function is as follows. Involved in copper export. The chain is Copper-exporting P-type ATPase (copA) from Staphylococcus aureus (strain USA300 / TCH1516).